The chain runs to 273 residues: Ethanolamine ammonia-lyase small subunit (273 aa).

Adenosylcob(III)alamin is bound by residues Val164, Glu185, and Cys214.

This sequence belongs to the EutC family. In terms of assembly, the basic unit is a heterodimer which dimerizes to form tetramers. The heterotetramers trimerize; 6 large subunits form a core ring with 6 small subunits projecting outwards. It depends on adenosylcob(III)alamin as a cofactor.

It localises to the bacterial microcompartment. The enzyme catalyses ethanolamine = acetaldehyde + NH4(+). It functions in the pathway amine and polyamine degradation; ethanolamine degradation. Its function is as follows. Catalyzes the deamination of various vicinal amino-alcohols to oxo compounds. Allows this organism to utilize ethanolamine as the sole source of nitrogen and carbon in the presence of external vitamin B12. In Pseudomonas aeruginosa (strain UCBPP-PA14), this protein is Ethanolamine ammonia-lyase small subunit.